Here is a 572-residue protein sequence, read N- to C-terminus: MANIVWCNIAMFLLVSLFLTDDAVVVLDALDNVPNNIKNQPYRTGYHFQPPKNWMNDPNGPMIYKGIYHLFYQWNQNGAVMDVNKTVWGHATSTDLINWITLSPAIRPSRPSDINGCWSGSVTILPNGKPVILYTGNDRYNRQVQNLVKPKNLTDPYLRHWTKSPENPLVTPSPVNHINSSAFRDPTTAWFGRDGRWRITTGSQEGRRGLAILHTSKDFVIWKQSPKPLHYHDGTGMWECPDFFPVARTDSRGLDTSFSSGPMVKHVLKVSLTDTFNDYYTIGTYDEVRDVYVPDKGFVQDETAPRYDYGKFYASKTFYDSVNQRRILWGWVNESSPEKDNIKKGWAGLQAIPRKVWLDESGKRLVQWPVKEIERLRTTQVKWGNKLLKGGSVMEVHGVTAPQADVEVFFKVSGFDLEKADVIEPGWTDPQLICSQRNASSGLGPFGLMVLASKNMEEYTSVNIRIFRAGENSKEHVVVMCSDQSTSSLEKGNDKTTYGAFLDISPYQPISLRTLIDKSIVESFGGKGKTCITSRVYPKLAIGERTHLFAFNKGSQNVNVLSLSAWSMKSSL.

The N-terminal stretch at 1–23 is a signal peptide; that stretch reads MANIVWCNIAMFLLVSLFLTDDA. Residues 54-57 and Gln-73 contribute to the substrate site; that span reads WMND. Asp-57 is a catalytic residue. Asn-84 carries an N-linked (GlcNAc...) asparagine glycan. Position 118–119 (118–119) interacts with substrate; sequence WS. N-linked (GlcNAc...) asparagine glycans are attached at residues Asn-152 and Asn-179. Substrate is bound by residues 184–185 and Glu-239; that span reads RD. N-linked (GlcNAc...) asparagine glycans are attached at residues Asn-333 and Asn-438. A disulfide bond links Cys-434 and Cys-481.

Belongs to the glycosyl hydrolase 32 family. Expressed in flowers, and, to a lower extent, in leaves.

The protein resides in the secreted. It is found in the extracellular space. It localises to the apoplast. The protein localises to the cell wall. It catalyses the reaction Hydrolysis of terminal non-reducing beta-D-fructofuranoside residues in beta-D-fructofuranosides.. The sequence is that of Beta-fructofuranosidase, insoluble isoenzyme CWINV5 (CWINV5) from Arabidopsis thaliana (Mouse-ear cress).